The sequence spans 679 residues: Mitotic interactor and substrate of PLK1 (679 aa).

Position 78 is a phosphoserine; by CDK1; in vitro (S78). Disordered regions lie at residues 151-182 (AVRK…TPLE) and 206-245 (ANKG…GHVV). Residues 153-163 (RKSSTVATLQG) show a composition bias toward polar residues. S156 bears the Phosphoserine mark. T164 and T172 each carry phosphothreonine; by CDK1; in vitro. A Phosphothreonine modification is found at T179. Position 214 is a phosphoserine; by CDK1; in vitro (S214). At T219 the chain carries Phosphothreonine. A Phosphothreonine; by CDK1; in vitro modification is found at T224. S284 carries the post-translational modification Phosphoserine; by CDK1; in vitro. At T287 the chain carries Phosphothreonine; by CDK1; in vitro. A Phosphoserine modification is found at S348. A compositionally biased stretch (basic and acidic residues) spans 360–371 (QREEDHRREGLH). A disordered region spans residues 360-419 (QREEDHRREGLHVGRASTPDWVSEGPQPGLRRALSSDSILSPAPDARAADPAPEVRKVNR). Residue T377 is modified to Phosphothreonine; by CDK1; in vitro. Residue S382 is modified to Phosphoserine; by CDK1; in vitro. Residues S394, S395, and S397 each carry the phosphoserine; by PLK1; in vitro modification. S400 is subject to Phosphoserine. The segment covering 401-411 (PAPDARAADPA) has biased composition (low complexity). At S430 the chain carries Phosphoserine. A disordered region spans residues 447–494 (PSSLSTAEAKAATSPKATMSPRHLSESSGKPLSTKQEASKPPRGCPQA). The residue at position 471 (S471) is a Phosphoserine; by PLK1; in vitro. The span at 472 to 482 (ESSGKPLSTKQ) shows a compositional bias: polar residues. Phosphoserine occurs at positions 541 and 543. Positions 545–569 (DLLERERESVLRREQEVAEERRNAL) form a coiled coil. Positions 557–567 (REQEVAEERRN) are enriched in basic and acidic residues. Disordered regions lie at residues 557-598 (REQE…ITGS) and 622-643 (DPVD…GINP). A Phosphoserine; by CDK1; in vitro modification is found at S575. The residue at position 577 (T577) is a Phosphothreonine. Phosphoserine; by PLK1; in vitro is present on residues S582 and S586. The span at 583 to 593 (DQNSRSSSQAS) shows a compositional bias: low complexity. S675 is modified (phosphoserine).

This sequence belongs to the MISP family. In terms of assembly, associates with F-actin. Interacts with DCTN1; this interaction regulates DCTN1 distribution at the cell cortex. Interacts with PTK2/FAK and MAPRE1. Post-translationally, phosphorylated by CDK1 and PLK1. CDK1 is the priming kinase for PLK1 phosphorylation. Phosphorylation by PLK1 is required for proper spindle orientation at metaphase.

It is found in the cell junction. Its subcellular location is the focal adhesion. The protein resides in the cytoplasm. It localises to the cytoskeleton. The protein localises to the cell cortex. Its function is as follows. Plays a role in mitotic spindle orientation and mitotic progression. Regulates the distribution of dynactin at the cell cortex in a PLK1-dependent manner, thus stabilizing cortical and astral microtubule attachments required for proper mitotic spindle positioning. May link microtubules to the actin cytospkeleton and focal adhesions. May be required for directed cell migration and centrosome orientation. May also be necessary for proper stacking of the Golgi apparatus. In Homo sapiens (Human), this protein is Mitotic interactor and substrate of PLK1.